The following is a 367-amino-acid chain: Queuine tRNA-ribosyltransferase (367 aa).

Catalysis depends on Asp-89, which acts as the Proton acceptor. Residues 89 to 93, Asp-143, Gln-187, and Gly-214 each bind substrate; that span reads DSGGF. An RNA binding region spans residues 245-251; that stretch reads GVGTPAD. The active-site Nucleophile is the Asp-264. Positions 269–273 are RNA binding; important for wobble base 34 recognition; it reads TRNAR. The Zn(2+) site is built by Cys-302, Cys-304, Cys-307, and His-333.

It belongs to the queuine tRNA-ribosyltransferase family. As to quaternary structure, homodimer. Within each dimer, one monomer is responsible for RNA recognition and catalysis, while the other monomer binds to the replacement base PreQ1. It depends on Zn(2+) as a cofactor.

The enzyme catalyses 7-aminomethyl-7-carbaguanine + guanosine(34) in tRNA = 7-aminomethyl-7-carbaguanosine(34) in tRNA + guanine. It functions in the pathway tRNA modification; tRNA-queuosine biosynthesis. Catalyzes the base-exchange of a guanine (G) residue with the queuine precursor 7-aminomethyl-7-deazaguanine (PreQ1) at position 34 (anticodon wobble position) in tRNAs with GU(N) anticodons (tRNA-Asp, -Asn, -His and -Tyr). Catalysis occurs through a double-displacement mechanism. The nucleophile active site attacks the C1' of nucleotide 34 to detach the guanine base from the RNA, forming a covalent enzyme-RNA intermediate. The proton acceptor active site deprotonates the incoming PreQ1, allowing a nucleophilic attack on the C1' of the ribose to form the product. After dissociation, two additional enzymatic reactions on the tRNA convert PreQ1 to queuine (Q), resulting in the hypermodified nucleoside queuosine (7-(((4,5-cis-dihydroxy-2-cyclopenten-1-yl)amino)methyl)-7-deazaguanosine). The polypeptide is Queuine tRNA-ribosyltransferase (Nitrosospira multiformis (strain ATCC 25196 / NCIMB 11849 / C 71)).